A 198-amino-acid polypeptide reads, in one-letter code: Recombination protein RecR (198 aa).

A C4-type zinc finger spans residues 57–72 (CSVCGNLTDEDPCSIC). The Toprim domain occupies 80–175 (SMILVVEDSK…KVTRLARGLA (96 aa)).

This sequence belongs to the RecR family.

May play a role in DNA repair. It seems to be involved in an RecBC-independent recombinational process of DNA repair. It may act with RecF and RecO. In Streptococcus uberis (strain ATCC BAA-854 / 0140J), this protein is Recombination protein RecR.